Reading from the N-terminus, the 253-residue chain is Zinc finger protein GIS (253 aa).

Residues 1-10 (MDEATGETET) show a composition bias toward acidic residues. Residues 1–85 (MDEATGETET…GDNSTDNNSI (85 aa)) form a disordered region. 3 stretches are compositionally biased toward polar residues: residues 11–21 (QDFMNVESFSQ), 49–63 (SITT…PYQT), and 76–85 (GDNSTDNNSI). Residues 91–113 (FECHYCFRNFPTSQALGGHQNAH) form a C2H2-type zinc finger.

In terms of tissue distribution, expressed in inflorescence meristems, floral meristems and stem epidermis.

The protein localises to the nucleus. In terms of biological role, probable transcription factor required for the initiation of inflorescence trichomes in response to gibberellin (GA). Mediates the induction of GL1 expression by GA in inflorescence organs and is antagonized in its action by the DELLA repressor GAI. Acts upstream of the trichome initiation regulators GL1 and GL3, and downstream of the GA signaling repressor SPINDLY (SPY). Does not play a significant role in the cytokinin response. Controls trichome branching through GA signaling. Acts downstream of the key regulator STICHEL (STI) in an endoreduplication-independent pathway. Controls trichome cell division indirectly by acting downstream of a key endoreduplication regulator SIAMESE (SIM). The protein is Zinc finger protein GIS (GIS) of Arabidopsis thaliana (Mouse-ear cress).